Reading from the N-terminus, the 227-residue chain is uncharacterized protein (227 aa).

It belongs to the flavoredoxin family. FMN serves as cofactor.

This is an uncharacterized protein from Deinococcus radiodurans (strain ATCC 13939 / DSM 20539 / JCM 16871 / CCUG 27074 / LMG 4051 / NBRC 15346 / NCIMB 9279 / VKM B-1422 / R1).